A 336-amino-acid chain; its full sequence is Phospho-N-acetylmuramoyl-pentapeptide-transferase (336 aa).

10 helical membrane-spanning segments follow: residues 3–23, 53–73, 78–98, 118–138, 143–163, 174–194, 200–220, 226–246, 251–271, and 316–336; these read LTLIAAIISFMVSAFTMPYFI, GGTVFLLVATAVSLLVNLFSI, SLALISGILSIVVIYGIIGFL, LALQLAGGLMFYFLHVSPSGI, VFGYQLSLGIFYLFFVLFWVV, GIDGLASISVVISLVTYGVIA, FDVLLLIGTMIGALLGFFCFN, VFMGDVGSLALGAMLAAISIA, WTLLIIGIVYVLETSSVMLQV, and AFLWGVGSLASLLVLAILYVF.

It belongs to the glycosyltransferase 4 family. MraY subfamily. The cofactor is Mg(2+).

The protein resides in the cell membrane. It catalyses the reaction UDP-N-acetyl-alpha-D-muramoyl-L-alanyl-gamma-D-glutamyl-L-lysyl-D-alanyl-D-alanine + di-trans,octa-cis-undecaprenyl phosphate = Mur2Ac(oyl-L-Ala-gamma-D-Glu-L-Lys-D-Ala-D-Ala)-di-trans,octa-cis-undecaprenyl diphosphate + UMP. The protein operates within cell wall biogenesis; peptidoglycan biosynthesis. Its function is as follows. Catalyzes the initial step of the lipid cycle reactions in the biosynthesis of the cell wall peptidoglycan: transfers peptidoglycan precursor phospho-MurNAc-pentapeptide from UDP-MurNAc-pentapeptide onto the lipid carrier undecaprenyl phosphate, yielding undecaprenyl-pyrophosphoryl-MurNAc-pentapeptide, known as lipid I. This chain is Phospho-N-acetylmuramoyl-pentapeptide-transferase, found in Streptococcus pyogenes serotype M5 (strain Manfredo).